The following is an 80-amino-acid chain: Dermaseptin-A5 (80 aa).

Positions 1 to 22 (MAFLKKSLFLVLFLGLVSLSIC) are cleaved as a signal peptide. A propeptide spanning residues 23–43 (EEEKRENEDEEEQEDDEQSEM) is cleaved from the precursor. Residues 24 to 45 (EEKRENEDEEEQEDDEQSEMKR) are disordered. The span at 30-40 (EDEEEQEDDEQ) shows a compositional bias: acidic residues. Valine amide is present on V77. Positions 79 to 80 (EQ) are excised as a propeptide.

The protein belongs to the frog skin active peptide (FSAP) family. Dermaseptin subfamily. Expressed by the skin glands.

It localises to the secreted. In terms of biological role, possesses a potent antimicrobial activity against Gram-positive and Gram-negative bacteria. Probably acts by disturbing membrane functions with its amphipathic structure. The chain is Dermaseptin-A5 from Agalychnis annae (Blue-sided leaf frog).